The primary structure comprises 122 residues: Large ribosomal subunit protein uL14 (122 aa).

This sequence belongs to the universal ribosomal protein uL14 family. As to quaternary structure, part of the 50S ribosomal subunit. Forms a cluster with proteins L3 and L19. In the 70S ribosome, L14 and L19 interact and together make contacts with the 16S rRNA in bridges B5 and B8.

Its function is as follows. Binds to 23S rRNA. Forms part of two intersubunit bridges in the 70S ribosome. In Desulfotalea psychrophila (strain LSv54 / DSM 12343), this protein is Large ribosomal subunit protein uL14.